A 113-amino-acid chain; its full sequence is U11-theraphotoxin-Hhn1a (113 aa).

Residues 1–21 (MNTVRVTFLLVFVLAVSLGQA) form the signal peptide. Positions 22–74 (DKDENRMVMQEKTEQGKSYLDFAENLLLQKLEELEAKLLEEDSEESRNSRQKR) are excised as a propeptide. 3 disulfide bridges follow: cysteine 75–cysteine 90, cysteine 82–cysteine 95, and cysteine 89–cysteine 110.

This sequence belongs to the neurotoxin 14 (magi-1) family. 01 (HNTX-16) subfamily. In terms of tissue distribution, expressed by the venom gland.

The protein localises to the secreted. Probable ion channel inhibitor. In Cyriopagopus hainanus (Chinese bird spider), this protein is U11-theraphotoxin-Hhn1a.